Here is a 262-residue protein sequence, read N- to C-terminus: Transmembrane protein 106A (262 aa).

A helical membrane pass occupies residues phenylalanine 95–phenylalanine 115.

It belongs to the TMEM106 family. In terms of tissue distribution, expressed in renal cells (at protein level). Expressed in epithelial cells.

Its subcellular location is the cell membrane. Functionally, activates macrophages and polarizes them into M1-like macrophages through the activation of the MAPK and NF-kappaB signaling pathway. Upon activation, up-regulates the expression of CD80, CD86, CD69 and MHC II on macrophages, and induces the release of pro-inflammatory cytokines such as TNF, IL1B, IL6, CCL2 and nitric oxide. May play a role in inhibition of proliferation and migration. This Homo sapiens (Human) protein is Transmembrane protein 106A (TMEM106A).